Consider the following 504-residue polypeptide: MEEFQVYLELNRSRRHDFLYPLIFREYIYALAHDHGLNKSMIFLENQGYVNKFSSLIVKRLIIRMDQQNHLIISANDSNQNPFFGHNNNLYSQMISAGFAVIVEIPFSLRLVSYSQGEEVAKSHNLQSIHSIFPFLEDKFSHLNYVLDVLIPHPIHLEILVQALRYWVKDASSLHLLRFSLYEYCNLKSFITPKKSISIFNPRLFFFLYNSHACEYESIFLFLRNQSSHLRSTSSGVFLERIYFYGKIEYLLEVFYNDFQNNLWLFKDPFIHFIRYQGKAILASKDTSLLMNKWKYYFVDLWQYHFYMWSQSGRVRINQLSKYSLDFLGYLSSVRLNPSVVRSQMLENSFIIDNAMKKLDTRIPIISLIGSLSKAKFCNTLGHPISKPTWADSSDSDIIDRFVRICRNLSHYHSGSSKKKSLYRIKYILRFSCVKTLARKHKNTVRAFLKRLGSEFLEEFFTETEEEHVFSLIFPRVFFTSRKLYRGRIWYLDIICINALVNHE.

The protein belongs to the intron maturase 2 family. MatK subfamily.

The protein resides in the plastid. The protein localises to the chloroplast. Its function is as follows. Usually encoded in the trnK tRNA gene intron. Probably assists in splicing its own and other chloroplast group II introns. The polypeptide is Maturase K (Adansonia digitata (Baobab tree)).